The sequence spans 459 residues: UDP-N-acetylmuramoylalanine--D-glutamate ligase (459 aa).

119 to 125 (GTNGKTT) provides a ligand contact to ATP.

It belongs to the MurCDEF family.

It is found in the cytoplasm. The enzyme catalyses UDP-N-acetyl-alpha-D-muramoyl-L-alanine + D-glutamate + ATP = UDP-N-acetyl-alpha-D-muramoyl-L-alanyl-D-glutamate + ADP + phosphate + H(+). The protein operates within cell wall biogenesis; peptidoglycan biosynthesis. Functionally, cell wall formation. Catalyzes the addition of glutamate to the nucleotide precursor UDP-N-acetylmuramoyl-L-alanine (UMA). This is UDP-N-acetylmuramoylalanine--D-glutamate ligase from Lacticaseibacillus paracasei (strain ATCC 334 / BCRC 17002 / CCUG 31169 / CIP 107868 / KCTC 3260 / NRRL B-441) (Lactobacillus paracasei).